A 95-amino-acid polypeptide reads, in one-letter code: Pyruvate dehydrogenase inhibitor (95 aa).

It belongs to the HesB/IscA family. Interacts with the E1 module of pyruvate dehydrogenase (PdhA-PdhB).

Functionally, acts as an inhibitor of the pyruvate dehydrogenase. Overexpression does not affect growth with glucose as the main carbon source, but it leads to a dramatic growth defect when cells are grown with pyruvate as the sole carbon source. The protein is Pyruvate dehydrogenase inhibitor of Bacillus subtilis (strain 168).